The chain runs to 75 residues: MLVLKRKTGEAIQIGDDIELTILAIEGDQVKLGIHAPRQIDIHRKEIYLAIQDENAEASQSTGLMSQLLKQRTDS.

It belongs to the CsrA/RsmA family. In terms of assembly, homodimer; the beta-strands of each monomer intercalate to form a hydrophobic core, while the alpha-helices form wings that extend away from the core.

The protein localises to the cytoplasm. Functionally, a translational regulator that binds mRNA to regulate translation initiation and/or mRNA stability. Usually binds in the 5'-UTR at or near the Shine-Dalgarno sequence preventing ribosome-binding, thus repressing translation. Its main target seems to be the major flagellin gene, while its function is anatagonized by FliW. The chain is Translational regulator CsrA from Exiguobacterium sibiricum (strain DSM 17290 / CCUG 55495 / CIP 109462 / JCM 13490 / 255-15).